The chain runs to 375 residues: Antichymotrypsin-2 (375 aa).

This sequence belongs to the serpin family. In terms of tissue distribution, hemolymph.

The protein resides in the secreted. The sequence is that of Antichymotrypsin-2 from Bombyx mori (Silk moth).